The following is a 1318-amino-acid chain: DNA-directed RNA polymerase subunit beta' (1318 aa).

4 residues coordinate Zn(2+): Cys60, Cys62, Cys75, and Cys78. Mg(2+) is bound by residues Asp535, Asp537, and Asp539. Positions 890, 967, 974, and 977 each coordinate Zn(2+).

Belongs to the RNA polymerase beta' chain family. As to quaternary structure, the RNAP catalytic core consists of 2 alpha, 1 beta, 1 beta' and 1 omega subunit. When a sigma factor is associated with the core the holoenzyme is formed, which can initiate transcription. Mg(2+) serves as cofactor. The cofactor is Zn(2+).

The enzyme catalyses RNA(n) + a ribonucleoside 5'-triphosphate = RNA(n+1) + diphosphate. Its function is as follows. DNA-dependent RNA polymerase catalyzes the transcription of DNA into RNA using the four ribonucleoside triphosphates as substrates. The polypeptide is DNA-directed RNA polymerase subunit beta' (Rhodococcus jostii (strain RHA1)).